A 118-amino-acid polypeptide reads, in one-letter code: Putative cytochrome P450 family member 4F30 (118 aa).

The tract at residues Met1–Gly64 is disordered. Residues Arg28–Ser43 show a composition bias toward polar residues.

The chain is Putative cytochrome P450 family member 4F30 (CYP4F30P) from Homo sapiens (Human).